The chain runs to 64 residues: Sperm protamine P1 (64 aa).

The interval 1-64 (MVRYRRHSRS…QSRRRRRRRY (64 aa)) is disordered.

Belongs to the protamine P1 family. In terms of tissue distribution, testis.

The protein localises to the nucleus. It is found in the chromosome. Functionally, protamines substitute for histones in the chromatin of sperm during the haploid phase of spermatogenesis. They compact sperm DNA into a highly condensed, stable and inactive complex. This is Sperm protamine P1 (PRM1) from Dromiciops gliroides (Monito del Monte).